The sequence spans 271 residues: Bifunctional protein FolD (271 aa).

Residues 154–156 (GRS), serine 181, and isoleucine 222 contribute to the NADP(+) site.

The protein belongs to the tetrahydrofolate dehydrogenase/cyclohydrolase family. In terms of assembly, homodimer.

It carries out the reaction (6R)-5,10-methylene-5,6,7,8-tetrahydrofolate + NADP(+) = (6R)-5,10-methenyltetrahydrofolate + NADPH. The enzyme catalyses (6R)-5,10-methenyltetrahydrofolate + H2O = (6R)-10-formyltetrahydrofolate + H(+). It functions in the pathway one-carbon metabolism; tetrahydrofolate interconversion. Functionally, catalyzes the oxidation of 5,10-methylenetetrahydrofolate to 5,10-methenyltetrahydrofolate and then the hydrolysis of 5,10-methenyltetrahydrofolate to 10-formyltetrahydrofolate. The protein is Bifunctional protein FolD of Thermotoga petrophila (strain ATCC BAA-488 / DSM 13995 / JCM 10881 / RKU-1).